A 72-amino-acid chain; its full sequence is DNA gyrase inhibitor YacG (72 aa).

Positions 17, 20, 32, and 36 each coordinate Zn(2+). A disordered region spans residues 52 to 72 (PGPEEDEMSYPPHSNDGNRSR).

The protein belongs to the DNA gyrase inhibitor YacG family. Interacts with GyrB. Requires Zn(2+) as cofactor.

Functionally, inhibits all the catalytic activities of DNA gyrase by preventing its interaction with DNA. Acts by binding directly to the C-terminal domain of GyrB, which probably disrupts DNA binding by the gyrase. The polypeptide is DNA gyrase inhibitor YacG (Methylorubrum extorquens (strain CM4 / NCIMB 13688) (Methylobacterium extorquens)).